A 788-amino-acid polypeptide reads, in one-letter code: Integrin beta-3 (788 aa).

The first 26 residues, 1–26 (MRARPRPRPLWATVLALGALAGVGVG), serve as a signal peptide directing secretion. Residues 27–718 (GPNICTTRGV…EEPECPKGPD (692 aa)) are Extracellular-facing. In terms of domain architecture, PSI spans 30-76 (ICTTRGVSSCQQCLAVSPMCAWCSDEALPLGSPRCDLKENLLKDNCA). Intrachain disulfides connect Cys31–Cys49, Cys39–Cys461, Cys42–Cys64, Cys52–Cys75, Cys203–Cys210, Cys258–Cys299, Cys400–Cys412, Cys432–Cys459, Cys463–Cys483, Cys474–Cys486, Cys488–Cys497, Cys499–Cys529, Cys512–Cys527, Cys521–Cys532, Cys534–Cys547, Cys549–Cys570, Cys554–Cys568, Cys562–Cys573, and Cys575–Cys584. An N-linked (GlcNAc...) asparagine glycan is attached at Asn125. Residues 135-377 (DYPVDIYYLM…QLIVDAYGKI (243 aa)) enclose the VWFA domain. Residues Ser147 and Ser149 each coordinate Mg(2+). Residues Ser149, Asp152, Asp153, and Asp184 each contribute to the Ca(2+) site. An involved in CX3CL1-, NRG1-, FGF1- and IGF1-binding region spans residues 203–210 (CYDMKTTC). The Ca(2+) site is built by Asn241, Asp243, Pro245, Glu246, and Asp277. Glu246 contacts Mg(2+). Positions 293 to 313 (QPNDGQCHVGSDNHYSASTTM) are CX3CL1-binding. N-linked (GlcNAc...) asparagine glycosylation is present at Asn346. Met361 contacts Ca(2+). An N-linked (GlcNAc...) asparagine glycan is attached at Asn397. I-EGF domains lie at 463-498 (CQAQAEPNSHRCNNGNGTFECGVCRCGPGWLGSQCE), 499-548 (CSEE…KYCE), 549-585 (CDDFSCVRYKGEMCSGHGQCSCGDCLCDSDWTGYYCN), and 586-625 (CTTRTDTCMSSNGLLCSGRGKCECGSCVCIQPGSYGDTCE). Asn478 carries an N-linked (GlcNAc...) asparagine glycan. Residue Asn585 is glycosylated (N-linked (GlcNAc...) asparagine). 9 cysteine pairs are disulfide-bonded: Cys586-Cys609, Cys593-Cys607, Cys601-Cys612, Cys614-Cys624, Cys627-Cys630, Cys634-Cys681, Cys640-Cys661, Cys643-Cys657, and Cys689-Cys713. Asn680 carries N-linked (GlcNAc...) asparagine glycosylation. A helical transmembrane segment spans residues 719–741 (ILVVLLSVMGAILLIGLAALLIW). The Cytoplasmic portion of the chain corresponds to 742–788 (KLLITIHDRKEFAKFEEERARAKWDTANNPLYKEATSTFTNITYRGT). The residue at position 767 (Thr767) is a Phosphothreonine. A Phosphotyrosine modification is found at Tyr773. The LIR signature appears at 777-783 (TSTFTNI). Thr779 carries the phosphothreonine; by PDPK1 and PKB/AKT1; in vitro modification. Position 785 is a phosphotyrosine (Tyr785).

This sequence belongs to the integrin beta chain family. Heterodimer of an alpha and a beta subunit. Beta-3 (ITGB3) associates with either alpha-IIb (ITGA2B) or alpha-V (ITGAV). Isoform Beta-3C interacts with FLNB. Interacts with COMP. Interacts with PDIA6 following platelet stimulation. Interacts with SYK; upon activation by ITGB3 promotes platelet adhesion. Interacts with MYO10. Interacts with DAB2. Interacts with FERMT2. Interacts with EMP2; regulates the levels of the heterodimer ITGA5:ITGB3 integrin expression on the plasma membrane. Integrin ITGAV:ITGB3 interacts with FBLN5 (via N-terminus). ITGAV:ITGB3 interacts with CCN3. ITGAV:ITGB3 and ITGA2B:ITGB3 interact with SELP (via C-type lectin domain); the interaction mediates cell-cell interaction and adhesion. ITGAV:ITGB3 is found in a ternary complex with CX3CR1 and CX3CL1. ITGAV:ITGB3 is found in a ternary complex with NRG1 and ERBB3. ITGAV:ITGB3 is found in a ternary complex with FGF1 and FGFR1. ITGAV:ITGB3 interacts with FGF2; it is likely that FGF2 can simultaneously bind ITGAV:ITGB3 and FGF receptors. ITGAV:ITGB3 binds to IL1B. ITGAV:ITGB3 is found in a ternary complex with IGF1 and IGF1R. ITGAV:ITGB3 interacts with IGF2. ITGAV:ITGB3 interacts with FBN1. ITGAV:ITGB3 interacts with CD9, CD81 and CD151 (via second extracellular domain). Interacts (via the allosteric site (site 2)) with CXCL12 in a CXCR4-independent manner. Interacts with MXRA8/DICAM; the interaction inhibits ITGAV:ITGB3 heterodimer formation. ITGAV:ITGB3 interacts with PTN. Forms a complex with PTPRZ1 and PTN that stimulates endothelial cell migration through ITGB3 Tyr-773 phosphorylation. ITGAV:ITGB3 interacts with SLC6A4. Interacts with SLC6A4 (via C-terminus); this interaction regulates SLC6A4 trafficking. ITGA2B:ITGB3 interacts with PPIA/CYPA; the interaction is ROS and PPIase activity-dependent and is increased in the presence of thrombin. Interacts with tensin TNS3; TNS3 also interacts with PEAK1, thus acting as an adapter molecule to bridge the association of PEAK1 with ITGB3. Interacts with TM4SF19. In terms of assembly, (Microbial infection) Integrin ITGAV:ITGB3 interacts with herpes virus 8/HHV-8 glycoprotein B. As to quaternary structure, (Microbial infection) Integrin ITGAV:ITGB3 interacts with coxsackievirus A9 capsid proteins. (Microbial infection) Interacts with Hantaan virus glycoprotein G. In terms of assembly, (Microbial infection) Integrin ITGAV:ITGB3 interacts with cytomegalovirus/HHV-5 gH:gL proteins. As to quaternary structure, (Microbial infection) Integrin ITGA5:ITGB3 interacts with human metapneumovirus fusion protein. (Microbial infection) Integrin ITGAV:ITGB3 interacts with human parechovirus 1 capsid proteins. In terms of assembly, (Microbial infection) Integrin ITGAV:ITGB3 interacts with west nile virus envelope protein E. As to quaternary structure, (Microbial infection) Interacts with HIV-1 Tat. ITGAV:ITGB3 interacts with AGRA2. In terms of processing, phosphorylated on tyrosine residues in response to thrombin-induced platelet aggregation. Probably involved in outside-in signaling. A peptide (AA 740-762) is capable of binding GRB2 only when both Tyr-773 and Tyr-785 are phosphorylated. Phosphorylation of Thr-779 inhibits SHC binding. As to expression, isoform beta-3A and isoform beta-3C are widely expressed. Isoform beta-3A is specifically expressed in osteoblast cells; isoform beta-3C is specifically expressed in prostate and testis.

It is found in the cell membrane. It localises to the cell projection. The protein localises to the lamellipodium membrane. Its subcellular location is the cell junction. The protein resides in the focal adhesion. It is found in the postsynaptic cell membrane. It localises to the synapse. Its function is as follows. Integrin alpha-V/beta-3 (ITGAV:ITGB3) is a receptor for cytotactin, fibronectin, laminin, matrix metalloproteinase-2, osteopontin, osteomodulin, prothrombin, thrombospondin, vitronectin and von Willebrand factor. Integrin alpha-IIb/beta-3 (ITGA2B:ITGB3) is a receptor for fibronectin, fibrinogen, plasminogen, prothrombin, thrombospondin and vitronectin. Integrins alpha-IIb/beta-3 and alpha-V/beta-3 recognize the sequence R-G-D in a wide array of ligands. Integrin alpha-IIb/beta-3 recognizes the sequence H-H-L-G-G-G-A-K-Q-A-G-D-V in fibrinogen gamma chain. Following activation integrin alpha-IIb/beta-3 brings about platelet/platelet interaction through binding of soluble fibrinogen. This step leads to rapid platelet aggregation which physically plugs ruptured endothelial surface. Fibrinogen binding enhances SELP expression in activated platelets. ITGAV:ITGB3 binds to fractalkine (CX3CL1) and acts as its coreceptor in CX3CR1-dependent fractalkine signaling. ITGAV:ITGB3 binds to NRG1 (via EGF domain) and this binding is essential for NRG1-ERBB signaling. ITGAV:ITGB3 binds to FGF1 and this binding is essential for FGF1 signaling. ITGAV:ITGB3 binds to FGF2 and this binding is essential for FGF2 signaling. ITGAV:ITGB3 binds to IGF1 and this binding is essential for IGF1 signaling. ITGAV:ITGB3 binds to IGF2 and this binding is essential for IGF2 signaling. ITGAV:ITGB3 binds to IL1B and this binding is essential for IL1B signaling. ITGAV:ITGB3 binds to PLA2G2A via a site (site 2) which is distinct from the classical ligand-binding site (site 1) and this induces integrin conformational changes and enhanced ligand binding to site 1. ITGAV:ITGB3 acts as a receptor for fibrillin-1 (FBN1) and mediates R-G-D-dependent cell adhesion to FBN1. In brain, plays a role in synaptic transmission and plasticity. Involved in the regulation of the serotonin neurotransmission, is required to localize to specific compartments within the synapse the serotonin receptor SLC6A4 and for an appropriate reuptake of serotonin. Controls excitatory synaptic strength by regulating GRIA2-containing AMPAR endocytosis, which affects AMPAR abundance and composition. ITGAV:ITGB3 act as a receptor for CD40LG. ITGAV:ITGB3 acts as a receptor for IBSP and promotes cell adhesion and migration to IBSP. Functionally, (Microbial infection) Integrin ITGAV:ITGB3 acts as a receptor for Herpes virus 8/HHV-8. In terms of biological role, (Microbial infection) Integrin ITGAV:ITGB3 acts as a receptor for Coxsackievirus A9. (Microbial infection) Acts as a receptor for Hantaan virus. Its function is as follows. (Microbial infection) Integrin ITGAV:ITGB3 acts as a receptor for Cytomegalovirus/HHV-5. Functionally, (Microbial infection) Integrin ITGA5:ITGB3 acts as a receptor for Human metapneumovirus. In terms of biological role, (Microbial infection) Integrin ITGAV:ITGB3 acts aP05556s a receptor for Human parechovirus 1. (Microbial infection) Integrin ITGAV:ITGB3 acts as a receptor for West nile virus. Its function is as follows. (Microbial infection) In case of HIV-1 infection, the interaction with extracellular viral Tat protein seems to enhance angiogenesis in Kaposi's sarcoma lesions. The chain is Integrin beta-3 from Homo sapiens (Human).